Reading from the N-terminus, the 110-residue chain is UPF0060 membrane protein Pcryo_1341 (110 aa).

4 helical membrane-spanning segments follow: residues 7–27 (VGLFAITALAEIVGCYLPYLW), 33–53 (SIWLLVPSALSLVAFVWLLTL), 63–83 (AAYGGVYVTMAILWLWAVDGI), and 87–107 (TWDILGTSVALLGMAIIMFAP).

Belongs to the UPF0060 family.

It is found in the cell inner membrane. The chain is UPF0060 membrane protein Pcryo_1341 from Psychrobacter cryohalolentis (strain ATCC BAA-1226 / DSM 17306 / VKM B-2378 / K5).